Consider the following 512-residue polypeptide: ATP synthase subunit alpha (512 aa).

169–176 (GDRQTGKT) contributes to the ATP binding site.

It belongs to the ATPase alpha/beta chains family. In terms of assembly, F-type ATPases have 2 components, CF(1) - the catalytic core - and CF(0) - the membrane proton channel. CF(1) has five subunits: alpha(3), beta(3), gamma(1), delta(1), epsilon(1). CF(0) has three main subunits: a(1), b(2) and c(9-12). The alpha and beta chains form an alternating ring which encloses part of the gamma chain. CF(1) is attached to CF(0) by a central stalk formed by the gamma and epsilon chains, while a peripheral stalk is formed by the delta and b chains.

The protein resides in the cell inner membrane. It catalyses the reaction ATP + H2O + 4 H(+)(in) = ADP + phosphate + 5 H(+)(out). Its function is as follows. Produces ATP from ADP in the presence of a proton gradient across the membrane. The alpha chain is a regulatory subunit. This is ATP synthase subunit alpha from Ruegeria pomeroyi (strain ATCC 700808 / DSM 15171 / DSS-3) (Silicibacter pomeroyi).